The following is a 470-amino-acid chain: Acetyl-CoA decarbonylase/synthase complex subunit gamma (470 aa).

One can recognise a 4Fe-4S domain in the interval 1–62 (MKVKSPLEVY…DPKVKKKLEE (62 aa)). Residues C18, C21, C26, and C43 each coordinate [4Fe-4S] cluster.

In terms of assembly, heterodimer of delta and gamma chains. The ACDS complex is made up of alpha, epsilon, beta, gamma and delta chains with a probable stoichiometry of (alpha(2)epsilon(2))(4)-beta(8)-(gamma(1)delta(1))(8). It depends on corrinoid as a cofactor. Requires [4Fe-4S] cluster as cofactor.

The enzyme catalyses 5,6,7,8-tetrahydrosarcinapterin + methyl-Co(III)-[corrinoid Fe-S protein] = 5-methyltetrahydrosarcinapterin + Co(I)-[corrinoid Fe-S protein] + H(+). Functionally, part of a complex that catalyzes the reversible cleavage of acetyl-CoA, allowing autotrophic growth from CO(2). The polypeptide is Acetyl-CoA decarbonylase/synthase complex subunit gamma (Archaeoglobus fulgidus (strain ATCC 49558 / DSM 4304 / JCM 9628 / NBRC 100126 / VC-16)).